A 282-amino-acid polypeptide reads, in one-letter code: Pantothenate synthetase (282 aa).

Residue 30–37 (MGNLHEGH) coordinates ATP. H37 (proton donor) is an active-site residue. Q61 serves as a coordination point for (R)-pantoate. Residue Q61 coordinates beta-alanine. 148 to 151 (GQKD) contacts ATP. Q154 is a binding site for (R)-pantoate. ATP-binding positions include V177 and 185–188 (LSSR).

It belongs to the pantothenate synthetase family. Homodimer.

It localises to the cytoplasm. It carries out the reaction (R)-pantoate + beta-alanine + ATP = (R)-pantothenate + AMP + diphosphate + H(+). It participates in cofactor biosynthesis; (R)-pantothenate biosynthesis; (R)-pantothenate from (R)-pantoate and beta-alanine: step 1/1. Its function is as follows. Catalyzes the condensation of pantoate with beta-alanine in an ATP-dependent reaction via a pantoyl-adenylate intermediate. In Acinetobacter baumannii (strain AB0057), this protein is Pantothenate synthetase.